A 1139-amino-acid polypeptide reads, in one-letter code: Replication protein alpha-A (1139 aa).

The methyltransferase stretch occupies residues 60 to 438; sequence RRNISSEELQ…DGVKIAPDLI (379 aa). Positions 81–305 constitute an Alphavirus-like MT domain; sequence SSSACESGTH…HDLKDYLKYV (225 aa). Residues 611–637 are disordered; it reads SPLDLKSIPGSTPSHSSSDSEHSMTEE. Positions 617–627 are enriched in low complexity; the sequence is SIPGSTPSHSS. Residues 805 to 969 enclose the (+)RNA virus helicase ATP-binding domain; the sequence is DNTKLCNNWL…DYTKTIINPK (165 aa). A helicase region spans residues 835-1109; it reads LIDGVPGCGK…SRHTKTFTYC (275 aa). ATP is bound at residue 838-845; that stretch reads GVPGCGKS. One can recognise a (+)RNA virus helicase C-terminal domain in the interval 970-1139; the sequence is LRSYRIPGDV…PIRTFESHIV (170 aa).

As to quaternary structure, interacts with the suppressor of RNA silencing Gamma-B (via C-terminus).

It localises to the host chloroplast envelope. It carries out the reaction ATP + H2O = ADP + phosphate + H(+). In terms of biological role, probably contains methyltransferase and helicase activities. Methyltransferase displays a cytoplasmic capping enzyme activity. This function is necessary since all viral RNAs are synthesized in the cytoplasm, and host capping enzymes are restricted to the nucleus. Helicase region probably exhibits NTPase and RNA unwinding activities. In Barley stripe mosaic virus (BSMV), this protein is Replication protein alpha-A.